The primary structure comprises 681 residues: Transmembrane protein 168-A (681 aa).

The next 9 membrane-spanning stretches (helical) occupy residues 16–36, 47–67, 73–93, 135–155, 156–176, 184–204, 252–272, 281–301, and 346–365; these read FLRC…CLGM, MILV…ILYY, SASL…LCFL, PVVI…ASIS, LVFD…ALII, LALP…FQSL, FSLF…AFKL, VIPG…VFLV, and LVLF…WQVA. An N-linked (GlcNAc...) asparagine glycan is attached at asparagine 517.

This sequence belongs to the TMEM168 family.

The protein localises to the nucleus membrane. Plays a key role in maintaining the cardiac electrical stability by modulating cell surface expression of SCN5A. The protein is Transmembrane protein 168-A (tmem168a) of Danio rerio (Zebrafish).